The chain runs to 704 residues: G-protein coupled receptor-associated protein LMBRD2B (704 aa).

The Extracellular segment spans residues 1–3 (MSG). The helical transmembrane segment at 4–21 (AALGIEIVVVFFLALFLL) threads the bilayer. Residues 22 to 33 (HRYGDFKKQQRM) lie on the Cytoplasmic side of the membrane. Residues 34 to 54 (VLFGTLLAWYLCFLIVFILPL) traverse the membrane as a helical segment. At 55 to 111 (DVSTTIYNQCLIDQEAQTQTPSVSPVLSEQTTANASISPAKSTQRVCYKPWSYIPDG) the chain is on the extracellular side. N-linked (GlcNAc...) asparagine glycosylation is present at N88. The helical transmembrane segment at 112–132 (IMPVFWRVVYWTSQCLTWLLL) threads the bilayer. The Cytoplasmic segment spans residues 133–157 (PFMQSYARSGGFTITGKIKTALIEN). The helical transmembrane segment at 158–178 (AIYYGTYLFIFGSLLIYVAVH) threads the bilayer. The Extracellular portion of the chain corresponds to 179-192 (PQWHLSWYELQTIG). A helical membrane pass occupies residues 193–213 (ITAANTWGLFLLVLLLGYGLV). Residues 214–393 (DIPRSYWEAS…ECLLKQWFYR (180 aa)) lie on the Cytoplasmic side of the membrane. Positions 235–266 (KAAKLMTEKADSEENLEDVMEEVRKINESIKY) form a coiled coil. The helical transmembrane segment at 394–414 (VLAVVLALFSVAVVWSECTFF) threads the bilayer. Residues 415–438 (STHPVLSLFAVFIQLAERDYNYLY) lie on the Extracellular side of the membrane. The chain crosses the membrane as a helical span at residues 439–459 (IEMACFITIFFLCTCVYSTVF). The Cytoplasmic segment spans residues 460-481 (RIRVFNYYYLASHHQTDAYSLQ). The chain crosses the membrane as a helical span at residues 482–502 (FSGMLFCRLTPPLCLNFLGLI). At 503–527 (HMDSAISHQAKKQTAYTSIMGSMRV) the chain is on the extracellular side. Residues 528 to 548 (LSFIANGFYIYYPMLIVVLCI) traverse the membrane as a helical segment. Topologically, residues 549 to 704 (ATYFSLGTRC…SSRNRIFDDV (156 aa)) are cytoplasmic. Residues 576 to 612 (DLIDEGRELLRRERRKRQRIEDGENRRREWRERYAQR) are a coiled coil. Disordered regions lie at residues 613-654 (DENA…QSGR) and 672-704 (TLTD…FDDV). A compositionally biased stretch (polar residues) spans 631 to 654 (YGETLNANTNRQAKYTRSGSQSGR).

The protein belongs to the LIMR family.

It is found in the cell membrane. In terms of biological role, may associate with G-protein coupled receptors and regulate downstream signaling pathways. The sequence is that of G-protein coupled receptor-associated protein LMBRD2B (lmbrd2b) from Danio rerio (Zebrafish).